The sequence spans 347 residues: S-adenosylmethionine:tRNA ribosyltransferase-isomerase (347 aa).

Belongs to the QueA family. As to quaternary structure, monomer.

Its subcellular location is the cytoplasm. It catalyses the reaction 7-aminomethyl-7-carbaguanosine(34) in tRNA + S-adenosyl-L-methionine = epoxyqueuosine(34) in tRNA + adenine + L-methionine + 2 H(+). It functions in the pathway tRNA modification; tRNA-queuosine biosynthesis. Its function is as follows. Transfers and isomerizes the ribose moiety from AdoMet to the 7-aminomethyl group of 7-deazaguanine (preQ1-tRNA) to give epoxyqueuosine (oQ-tRNA). The polypeptide is S-adenosylmethionine:tRNA ribosyltransferase-isomerase (Exiguobacterium sibiricum (strain DSM 17290 / CCUG 55495 / CIP 109462 / JCM 13490 / 255-15)).